Reading from the N-terminus, the 649-residue chain is Exoribonuclease 2 (649 aa).

An RNB domain is found at 190 to 517 (RKDLTDLDFI…NHRLLKSIIK (328 aa)). Residues 562 to 644 (NQKFNAEITD…KTRSIIAKPV (83 aa)) enclose the S1 motif domain.

It belongs to the RNR ribonuclease family. RNase II subfamily.

The protein localises to the cytoplasm. The enzyme catalyses Exonucleolytic cleavage in the 3'- to 5'-direction to yield nucleoside 5'-phosphates.. In terms of biological role, involved in mRNA degradation. Hydrolyzes single-stranded polyribonucleotides processively in the 3' to 5' direction. The sequence is that of Exoribonuclease 2 from Buchnera aphidicola subsp. Acyrthosiphon pisum (strain 5A).